Consider the following 212-residue polypeptide: uncharacterized protein (212 aa).

It belongs to the flavoredoxin family. Requires FMN as cofactor.

This is an uncharacterized protein from Methanothermobacter thermautotrophicus (strain ATCC 29096 / DSM 1053 / JCM 10044 / NBRC 100330 / Delta H) (Methanobacterium thermoautotrophicum).